A 359-amino-acid polypeptide reads, in one-letter code: Ferredoxin--NADP reductase (359 aa).

The FAD site is built by Asp-48, Gln-56, Tyr-61, Ala-101, Phe-139, Asp-304, and Ser-345. The segment at 340–359 is disordered; the sequence is VHTHTSNDTNLQSRLHAAAE. Over residues 341–352 the composition is skewed to polar residues; the sequence is HTHTSNDTNLQS.

Belongs to the ferredoxin--NADP reductase type 2 family. As to quaternary structure, homodimer. Requires FAD as cofactor.

It carries out the reaction 2 reduced [2Fe-2S]-[ferredoxin] + NADP(+) + H(+) = 2 oxidized [2Fe-2S]-[ferredoxin] + NADPH. This chain is Ferredoxin--NADP reductase, found in Ralstonia nicotianae (strain ATCC BAA-1114 / GMI1000) (Ralstonia solanacearum).